The sequence spans 1744 residues: MEGYLASVSLGEESTQMWSLNKRLEAYLSRVKALEEENELLRKEIHSLRSSKSERCWKKKHHEEMMKLRDALDDGHREMVQAEMVRDSIYEEIEFVKQRCLEEKQAREDAKKELSESKKLLEEETRAQIWLKERLGQLEAELEDILRDHEEEKALMEEEIASFSQRLENFRVAPVAFKPVEVDDYARKLSEIWQGAVEEYKSEVSVLEAGLSESKENLRKVLEENKQNRLLLQSLDKELVSLKMRKEALEDLLSKQWQEQKEEEEKLQRKAEALEQEKQDLRGQIAEVLEDRQQLMHLKMSLSLEVATYRSLLEAESTRIYTDYRGSYTFNDSMLEHNNVRRRQSEDTRKTVSKDHRQSYSKKQIGDKNELQRPSLNNFSTVKSSAVPVRTSPVTKEFQKVSSVLQSQGLKYTKAPQVKEVQTVSTVKSNLETHTFSGDAFRRAQVETRKTDEQVIKKDALGLNDLNKNTGFKEEKDIQKPGFMDHVVSKSVSSTEHKVPEIDPLESALKSLEEDLSSVSSTFNAGQSSNLEAIKDVLGEPICLENLQNEIAFEKESPGTNAAADPIEEVISESVSYQTVHFEKQELSNLLEIENTHENHVQDATQAFNSCEQDGHDRASTLENNEPDVQQYIRTLESNEIKESKIPSDNTEEAEIISKSRKVFLENEYIPVSKDDLTEFTSHLENDSESSQSFDSKLFENKSTEDQLITNLKSNTQENIFQSNQEHLENLEFDSVVPDTVKFMYPQENNLLEEENVYGDGELVQMATDENIINQSSDQLLLSDHSHHEETKTSESIAVEHNRMESEHAEVDKSSEIPVEISENVSVEEIIHEISDVEEDTKQAFEDERVGEQINQNNQESTVDLDGSVYSQEENSQLEEDEVSISEQIEKDFEINEQECLKSDQIREAFDTEEVDHQVVDFMQEQSFEREVGQLNNIKQEVDYLQNYDEDSFQNNDEPQELESCDLQEQKIKLEEENQLSENEGNQNFGGNDIEEFSQQGYDTDEICQETIGNQVSAQLLCESDINQDKLSMEDEEEQNNPETEDNIGLEQESDQENTRSNEGTKFSQEECDVVFKPEDMSDKSEYSGQQEDLDKQVTDFSLNEQANNDLLEKEEVILHHADDQRSVNDEITIDEKLSERIIDNELATVDVNESLAANKEQVDLFTDEYAVDDNVGMQDDDSGQYQTKEDLFVDGNNIIEKIEIQQTSLLNQEICERVDNVDEDISGEAKNESVEMNDVVDLVPEAKVTGDEQISPLQDEKLNLETMEDTKDNDGQLCLEKENETEYIEVTDSPQFATDLSHDAGRELTVDQNSANLQFCENPTKTLIAHHIEYETVADSDLESTEEQVQETERIPFKPEDSKMENENSESEESVDSQEISLNSHKSEEFEISKDYQLEQTLPDVTPLPNLEDEFEDLTEQPDVHEEHQNNDDSGASTFITSVDEDKEREVRESVSKDEESNEEEFGDVLSVDKTSQVEVTTLSGLAQEPSYLGDNEESEDSMENAEILNENPSNDIVDFMVSQMTETKIIIAEQVTEQTEVTLQFDDAPNKLTENLNAREKETYDYESNEENIEFTNENQSASPANDIVDENQSEDSVISDNEGTTSSYEDLPNATSISHVVALEESNISTTEQSSTDTKRMTYEGYEITSLQNVEDNAQETEKEFPSGVPLGQEDSRSEDEELDDEGSEFSFGVNDEKANGEHKDVGEDDETEDMLNGHSQTGYSKIVLTSKKALRWKRMF.

A head region spans residues 1-12 (MEGYLASVSLGE). The coil 1A stretch occupies residues 8-48 (VSLGEESTQMWSLNKRLEAYLSRVKALEEENELLRKEIHSL). Residues 13-320 (ESTQMWSLNK…SLLEAESTRI (308 aa)) enclose the IF rod domain. A linker 1 region spans residues 49-60 (RSSKSERCWKKK). The coil 1B stretch occupies residues 61 to 156 (HHEEMMKLRD…RDHEEEKALM (96 aa)). The tract at residues 157–179 (EEEIASFSQRLENFRVAPVAFKP) is linker 12. The tract at residues 180-193 (VEVDDYARKLSEIW) is coil 2A. The tract at residues 194–199 (QGAVEE) is linker 2. A coil 2B region spans residues 200–314 (YKSEVSVLEA…EVATYRSLLE (115 aa)). The interval 315 to 1744 (AESTRIYTDY…KKALRWKRMF (1430 aa)) is tail. 2 stretches are compositionally biased toward basic and acidic residues: residues 341–371 (RRRQ…KNEL) and 785–815 (HSHH…DKSS). Disordered regions lie at residues 341–372 (RRRQ…NELQ), 785–816 (HSHH…KSSE), 976–996 (EENQ…DIEE), 1032–1093 (SMED…QQED), 1340–1470 (DSDL…FGDV), 1485–1506 (SGLA…SMEN), and 1560–1722 (AREK…LNGH). Residues 980–990 (LSENEGNQNFG) are compositionally biased toward polar residues. Residues 1034-1056 (EDEEEQNNPETEDNIGLEQESDQ) show a composition bias toward acidic residues. Basic and acidic residues predominate over residues 1074 to 1086 (VVFKPEDMSDKSE). A compositionally biased stretch (acidic residues) spans 1340-1351 (DSDLESTEEQVQ). Over residues 1352–1367 (ETERIPFKPEDSKMEN) the composition is skewed to basic and acidic residues. The segment covering 1368-1377 (ENSESEESVD) has biased composition (acidic residues). Residues 1386–1398 (HKSEEFEISKDYQ) show a composition bias toward basic and acidic residues. The segment covering 1412–1421 (LEDEFEDLTE) has biased composition (acidic residues). The span at 1423-1432 (PDVHEEHQNN) shows a compositional bias: basic and acidic residues. A compositionally biased stretch (polar residues) spans 1433–1442 (DDSGASTFIT). Basic and acidic residues predominate over residues 1445–1460 (DEDKEREVRESVSKDE). Positions 1496 to 1505 (DNEESEDSME) are enriched in acidic residues. Composition is skewed to polar residues over residues 1576-1586 (EFTNENQSASP), 1597-1621 (EDSV…TSIS), and 1629-1639 (SNISTTEQSST). Residues 1680–1691 (RSEDEELDDEGS) are compositionally biased toward acidic residues. The span at 1698–1709 (NDEKANGEHKDV) shows a compositional bias: basic and acidic residues.

Belongs to the intermediate filament family. In terms of tissue distribution, growth cones of embryonic vertebrate neurons.

The polypeptide is Tanabin (Xenopus laevis (African clawed frog)).